Consider the following 874-residue polypeptide: Chaperone protein ClpB 1 (874 aa).

Positions 6-148 (PNQFTEKAWE…RQIIQQIRGS (143 aa)) constitute a Clp R domain. Repeat regions lie at residues 9–73 (FTEK…IARQ) and 85–148 (LGRS…IRGS). An NBD1 region spans residues 161–342 (EALEKYGRDL…RRFQQVFVDQ (182 aa)). 208–215 (GEPGVGKT) contributes to the ATP binding site. A linker region spans residues 343-551 (PTVEDTISIL…IAEIISKWTG (209 aa)). Positions 393–527 (IDLVDESAAR…MEGGLATTHT (135 aa)) form a coiled coil. Positions 561–772 (EMQKLLNLDE…RVDETIIFHS (212 aa)) are NBD2. 611 to 618 (GPTGVGKT) contributes to the ATP binding site. Residues 773 to 874 (LRKDQLQQIV…IATPTAVPLS (102 aa)) are C-terminal.

Belongs to the ClpA/ClpB family. In terms of assembly, homohexamer. The oligomerization is ATP-dependent.

It localises to the cytoplasm. Functionally, part of a stress-induced multi-chaperone system, it is involved in the recovery of the cell from heat-induced damage, in cooperation with DnaK, DnaJ and GrpE. Acts before DnaK, in the processing of protein aggregates. Protein binding stimulates the ATPase activity; ATP hydrolysis unfolds the denatured protein aggregates, which probably helps expose new hydrophobic binding sites on the surface of ClpB-bound aggregates, contributing to the solubilization and refolding of denatured protein aggregates by DnaK. Necessary for thermotolerance. This is Chaperone protein ClpB 1 (clpB1) from Synechococcus elongatus (strain ATCC 33912 / PCC 7942 / FACHB-805) (Anacystis nidulans R2).